Here is a 417-residue protein sequence, read N- to C-terminus: UPF0597 protein FMG_0209 (417 aa).

Belongs to the UPF0597 family.

The polypeptide is UPF0597 protein FMG_0209 (Finegoldia magna (strain ATCC 29328 / DSM 20472 / WAL 2508) (Peptostreptococcus magnus)).